Consider the following 31-residue polypeptide: Cycloviolacin-O23 (31 aa).

The segment at residues 1–31 is a cross-link (cyclopeptide (Gly-Asn)); it reads GLPTCGETCFGGTCNTPGCTCDSSWPICTHN. Cystine bridges form between Cys-5–Cys-19, Cys-9–Cys-21, and Cys-14–Cys-28.

This is a cyclic peptide. As to expression, expressed in leaves but not in petals, petioles, roots and runners (at protein level).

Its function is as follows. Probably participates in a plant defense mechanism. In Viola odorata (Sweet violet), this protein is Cycloviolacin-O23.